The chain runs to 240 residues: MGRIFETRKATMMARWNKMAKVFTRISKDIAIAVKAGGPNPDSNSTLRRVLQNARAANMPKDKVDAAIKRASGQSATDYEIVLYEGYAPHGIALLVETATDNVVRTVANVRMHFNKHSGNLGTAGSVAFMFQRMGVFRLNPEGLDLDSLELELIDHGLQEMGEGVGEKGEKQIIIRSAFADFGQLQAAIEAKGLVPVSADSEYVALNPIELPEDKATEVLELVDALEQDDDVQRVFHNLA.

Belongs to the TACO1 family.

It is found in the cytoplasm. The sequence is that of Probable transcriptional regulatory protein MXAN_7062 from Myxococcus xanthus (strain DK1622).